A 74-amino-acid chain; its full sequence is MKKERTESLVAQALKNIGNDRYKLDNLVFARVKQLNAGAKTLVNMDPKRHKLVDIAIREIAEGKIDIDRIDERN.

This sequence belongs to the RNA polymerase subunit omega family. The RNAP catalytic core consists of 2 alpha, 1 beta, 1 beta' and 1 omega subunit. When a sigma factor is associated with the core the holoenzyme is formed, which can initiate transcription.

The catalysed reaction is RNA(n) + a ribonucleoside 5'-triphosphate = RNA(n+1) + diphosphate. Promotes RNA polymerase assembly. Latches the N- and C-terminal regions of the beta' subunit thereby facilitating its interaction with the beta and alpha subunits. The protein is DNA-directed RNA polymerase subunit omega of Helicobacter pylori (strain P12).